The following is a 422-amino-acid chain: Serine--tRNA ligase (422 aa).

230-232 provides a ligand contact to L-serine; sequence TAE. 261 to 263 contacts ATP; sequence RNE. Glutamate 284 provides a ligand contact to L-serine. 347 to 350 provides a ligand contact to ATP; sequence EVSS. Residue serine 383 participates in L-serine binding.

It belongs to the class-II aminoacyl-tRNA synthetase family. Type-1 seryl-tRNA synthetase subfamily. As to quaternary structure, homodimer. The tRNA molecule binds across the dimer.

The protein resides in the cytoplasm. The catalysed reaction is tRNA(Ser) + L-serine + ATP = L-seryl-tRNA(Ser) + AMP + diphosphate + H(+). It carries out the reaction tRNA(Sec) + L-serine + ATP = L-seryl-tRNA(Sec) + AMP + diphosphate + H(+). The protein operates within aminoacyl-tRNA biosynthesis; selenocysteinyl-tRNA(Sec) biosynthesis; L-seryl-tRNA(Sec) from L-serine and tRNA(Sec): step 1/1. Functionally, catalyzes the attachment of serine to tRNA(Ser). Is also able to aminoacylate tRNA(Sec) with serine, to form the misacylated tRNA L-seryl-tRNA(Sec), which will be further converted into selenocysteinyl-tRNA(Sec). This chain is Serine--tRNA ligase, found in Herpetosiphon aurantiacus (strain ATCC 23779 / DSM 785 / 114-95).